A 231-amino-acid chain; its full sequence is Succinate dehydrogenase subunit 5, mitochondrial (231 aa).

The transit peptide at M1–F63 directs the protein to the mitochondrion.

As to quaternary structure, component of complex II composed of eight subunits in plants: four classical SDH subunits SDH1, SDH2, SDH3 and SDH4 (a flavoprotein (FP), an iron-sulfur protein (IP), and a cytochrome b composed of a large and a small subunit.), as well as four subunits unknown in mitochondria from bacteria and heterotrophic eukaryotes.

It localises to the mitochondrion inner membrane. It functions in the pathway carbohydrate metabolism; tricarboxylic acid cycle. The protein is Succinate dehydrogenase subunit 5, mitochondrial of Oryza sativa subsp. japonica (Rice).